The sequence spans 618 residues: Dihydroxy-acid dehydratase (618 aa).

Mg(2+) is bound at residue D81. C122 contributes to the [2Fe-2S] cluster binding site. Mg(2+) contacts are provided by D123 and K124. K124 is subject to N6-carboxylysine. A [2Fe-2S] cluster-binding site is contributed by C195. Position 491 (E491) interacts with Mg(2+). Residue S517 is the Proton acceptor of the active site.

The protein belongs to the IlvD/Edd family. In terms of assembly, homodimer. It depends on [2Fe-2S] cluster as a cofactor. Requires Mg(2+) as cofactor.

The enzyme catalyses (2R)-2,3-dihydroxy-3-methylbutanoate = 3-methyl-2-oxobutanoate + H2O. It carries out the reaction (2R,3R)-2,3-dihydroxy-3-methylpentanoate = (S)-3-methyl-2-oxopentanoate + H2O. It participates in amino-acid biosynthesis; L-isoleucine biosynthesis; L-isoleucine from 2-oxobutanoate: step 3/4. Its pathway is amino-acid biosynthesis; L-valine biosynthesis; L-valine from pyruvate: step 3/4. In terms of biological role, functions in the biosynthesis of branched-chain amino acids. Catalyzes the dehydration of (2R,3R)-2,3-dihydroxy-3-methylpentanoate (2,3-dihydroxy-3-methylvalerate) into 2-oxo-3-methylpentanoate (2-oxo-3-methylvalerate) and of (2R)-2,3-dihydroxy-3-methylbutanoate (2,3-dihydroxyisovalerate) into 2-oxo-3-methylbutanoate (2-oxoisovalerate), the penultimate precursor to L-isoleucine and L-valine, respectively. This is Dihydroxy-acid dehydratase from Rhodopseudomonas palustris (strain TIE-1).